A 689-amino-acid polypeptide reads, in one-letter code: Glycine--tRNA ligase beta subunit (689 aa).

Belongs to the class-II aminoacyl-tRNA synthetase family. As to quaternary structure, tetramer of two alpha and two beta subunits.

Its subcellular location is the cytoplasm. It carries out the reaction tRNA(Gly) + glycine + ATP = glycyl-tRNA(Gly) + AMP + diphosphate. This Klebsiella pneumoniae subsp. pneumoniae (strain ATCC 700721 / MGH 78578) protein is Glycine--tRNA ligase beta subunit.